The chain runs to 303 residues: Phytochrome-associated serine/threonine-protein phosphatase 3 (303 aa).

Zn(2+) contacts are provided by Asp50, His52, Asp78, and Asn110. His111 (proton donor) is an active-site residue. The Zn(2+) site is built by His160 and His234.

Belongs to the PPP phosphatase family. PP-6 (PP-V) subfamily. As to quaternary structure, interacts with PHYA and PHYB, mostly when they are phosphorylated and in Pfr forms. Interacts with TAP46. Interacts with NRP. Interacts with PIN1 and PIN2. Interacts with ABI5. Interacts with PIF3 and PIF4. Protein phosphatase 6 (PP6) holoenzyme is a heterotrimeric complex formed by the catalytic subunit FYPP, a SAPS domain-containing subunit (SAL) and a protein phosphatase 2A regulatory subunit A (PP2AA). Zn(2+) serves as cofactor. As to expression, mostly expressed in flowers. Also detected to a lower extent in stems and leaves. Expressed in roots.

It is found in the cytoplasm. The catalysed reaction is O-phospho-L-seryl-[protein] + H2O = L-seryl-[protein] + phosphate. The enzyme catalyses O-phospho-L-threonyl-[protein] + H2O = L-threonyl-[protein] + phosphate. In terms of biological role, catalytic subunit of protein phosphatase 6 (PP6). Dephosphorylates phosphorylated phytochromes, with a preference toward Pfr forms. Plays a major role in the photoperiodic control of flowering time in long days by modulating phytochrome signals in flowering time control. Involved in the regulation of polar auxin transport in roots. Dephosphorylates directly the auxin efflux carriers PIN1 and PIN2, thus promoting their proper polar localization in root cell plasma membrane. Acts antagonistically with the protein kinase PID to regulate the reversible phosphorylation of PIN and polar targeting, subsequently impacting polar auxin transport and plant development. Involved in the regulation of abscisic acid (ABA) signaling during seed germination and postgermination seedling growth. Functions as a negative regulator of ABA signaling through direct dephosphorylation and destabilization of ABI5 protein. Acts antagonistically with the protein kinase SRK2E/SNRK2.6 to regulate ABI5 phosphorylation and ABA responses. Involved in the regulation of phosphorylation status in hypocotyl phototropism. Involved in the negative regulation of photomorphogenesis by controlling the stability and transcriptional activity of PIF3 and PIF4 proteins in the dark, via the regulation of their phosphorylation status. The polypeptide is Phytochrome-associated serine/threonine-protein phosphatase 3 (Arabidopsis thaliana (Mouse-ear cress)).